The sequence spans 692 residues: Epithelial sodium channel subunit alpha (692 aa).

The interval 1-67 is disordered; that stretch reads MSSIKGNKLE…PAAPQQPTAE (67 aa). Residues 1–108 lie on the Cytoplasmic side of the membrane; that stretch reads MSSIKGNKLE…CSQHNRMKTA (108 aa). The span at 56–65 shows a compositional bias: low complexity; that stretch reads PEPAAPQQPT. A helical membrane pass occupies residues 109 to 129; it reads FWAVLWLCTFGMMYWQFGLLF. The Extracellular segment spans residues 130 to 585; sequence GEYFSYPVSL…SQWSLWFGSS (456 aa). Intrachain disulfides connect Cys156-Cys328, Cys252-Cys259, Cys305-Cys312, Cys417-Cys502, Cys439-Cys479, Cys439-Cys498, Cys443-Cys494, Cys452-Cys479, Cys452-Cys502, and Cys454-Cys468. The segment at 198 to 266 is gating release of inhibition by proteolysis (GRIP); protease-sensitive region that is responsible for the proteolytic activation of the channel; that stretch reads RSRRDLRGTL…SDCFYQTYSS (69 aa). A helical membrane pass occupies residues 586 to 606; sequence VLSVVEMAELIFDLLVITFLM. The Cytoplasmic segment spans residues 607 to 692; the sequence is LLRRFRSRYW…GSSACPLGGP (86 aa). Residues 627-692 are disordered; the sequence is EVASTLASSP…GSSACPLGGP (66 aa). A compositionally biased stretch (polar residues) spans 628 to 637; that stretch reads VASTLASSPP. The span at 653 to 666 shows a compositional bias: pro residues; sequence GPAPSPALTAPPPA. The short motif at 663–667 is the PY motif; recruits WW domain-containing proteins and is thereby required for ubiquitination and inhibition of the channel by NEDD4 and NEDD4L element; it reads PPPAY. A compositionally biased stretch (low complexity) spans 682 to 692; it reads AGSSACPLGGP.

This sequence belongs to the amiloride-sensitive sodium channel (TC 1.A.6) family. SCNN1A subfamily. Heterotrimer; containing an alpha/SCNN1A, a beta/SCNN1B and a gamma/SCNN1G subunit. Interacts with WWP1 (via WW domains). Interacts with WWP2 (via WW domains); inhibits the channel. Interacts with BPIFA1; the interaction is indirect via SCNN1B and inhibits the proteolytic processing of SCNN1A and SCNN1G and the activation of ENaC. Interacts with the full-length immature form of PCSK9 (pro-PCSK9). Post-translationally, ubiquitinated. Can be ubiquitinated at multiple sites and undergo monoubiquitination and polyubiquitination. Ubiquitination by NEDD4 or NEDD4L inhibits the ENaC channel through endocytosis, intracellular retention and degradation of its individual subunits. In terms of processing, N-glycosylated. ENaC is activated through the proteolytic maturation of its subunits. Furin cleaves the SCNN1A subunit, which results in a stepwise increase in the open probability of the channel due to the release of an inhibitory tract. BPIFA1, which is recruited by the SCNN1B subunit, prevents the proteolytic activation of ENaC.

The protein localises to the apical cell membrane. It is found in the cell projection. It localises to the cilium. The protein resides in the cytoplasmic granule. Its subcellular location is the cytoplasm. The protein localises to the cytoplasmic vesicle. It is found in the secretory vesicle. It localises to the acrosome. The protein resides in the flagellum. It carries out the reaction Na(+)(in) = Na(+)(out). With respect to regulation, originally identified and characterized by its inhibition by the diuretic drug amiloride. This is one of the three pore-forming subunits of the heterotrimeric epithelial sodium channel (ENaC), a critical regulator of sodium balance and fluid homeostasis. ENaC operates in epithelial tissues, where it mediates the electrodiffusion of sodium ions from extracellular fluid through the apical membrane of cells, with water following osmotically. It plays a key role in maintaining sodium homeostasis through electrogenic sodium reabsorption in the kidneys. Additionally, ENaC is essential for airway surface liquid homeostasis, which is crucial for proper mucus clearance. In Pan troglodytes (Chimpanzee), this protein is Epithelial sodium channel subunit alpha.